The sequence spans 269 residues: Indole-3-glycerol phosphate synthase (269 aa).

The protein belongs to the TrpC family.

It catalyses the reaction 1-(2-carboxyphenylamino)-1-deoxy-D-ribulose 5-phosphate + H(+) = (1S,2R)-1-C-(indol-3-yl)glycerol 3-phosphate + CO2 + H2O. Its pathway is amino-acid biosynthesis; L-tryptophan biosynthesis; L-tryptophan from chorismate: step 4/5. The polypeptide is Indole-3-glycerol phosphate synthase (Roseiflexus castenholzii (strain DSM 13941 / HLO8)).